A 556-amino-acid chain; its full sequence is Secreted RxLR effector protein 114 (556 aa).

The N-terminal stretch at 1–19 is a signal peptide; it reads MCGAHFVAIALLVAAGCQT. Disordered regions lie at residues 43 to 76, 108 to 138, and 389 to 408; these read LQSR…GVLK, NQLK…DSDK, and NDKS…EDWN. The short motif at 46-66 is the RxLR-dEER element; the sequence is RNLRESRDSKDDLLSAGDEER. Residues 47–67 show a composition bias toward basic and acidic residues; it reads NLRESRDSKDDLLSAGDEERT.

This sequence belongs to the RxLR effector family.

The protein resides in the secreted. The protein localises to the host cell. Functionally, secreted effector that partially suppresses the host cell death induced by cell death-inducing proteins. This is Secreted RxLR effector protein 114 from Plasmopara viticola (Downy mildew of grapevine).